The sequence spans 263 residues: 3-methyl-2-oxobutanoate hydroxymethyltransferase (263 aa).

D45 and D84 together coordinate Mg(2+). Residues 45-46 (DS), D84, and K112 each bind 3-methyl-2-oxobutanoate. Residue E114 coordinates Mg(2+). E181 serves as the catalytic Proton acceptor.

This sequence belongs to the PanB family. Homodecamer; pentamer of dimers. Requires Mg(2+) as cofactor.

Its subcellular location is the cytoplasm. It carries out the reaction 3-methyl-2-oxobutanoate + (6R)-5,10-methylene-5,6,7,8-tetrahydrofolate + H2O = 2-dehydropantoate + (6S)-5,6,7,8-tetrahydrofolate. It participates in cofactor biosynthesis; (R)-pantothenate biosynthesis; (R)-pantoate from 3-methyl-2-oxobutanoate: step 1/2. Its function is as follows. Catalyzes the reversible reaction in which hydroxymethyl group from 5,10-methylenetetrahydrofolate is transferred onto alpha-ketoisovalerate to form ketopantoate. This chain is 3-methyl-2-oxobutanoate hydroxymethyltransferase, found in Photorhabdus laumondii subsp. laumondii (strain DSM 15139 / CIP 105565 / TT01) (Photorhabdus luminescens subsp. laumondii).